We begin with the raw amino-acid sequence, 219 residues long: Uridylate kinase (219 aa).

9-10 (GS) is a binding site for ATP. G41 is a binding site for UMP. 2 residues coordinate ATP: G42 and R46. Residues D63 and 110–116 (TFPGHTT) each bind UMP. ATP is bound by residues T136, N137, Y142, and D145.

Belongs to the UMP kinase family. In terms of assembly, homohexamer.

It is found in the cytoplasm. It carries out the reaction UMP + ATP = UDP + ADP. It functions in the pathway pyrimidine metabolism; CTP biosynthesis via de novo pathway; UDP from UMP (UMPK route): step 1/1. Inhibited by UTP. Catalyzes the reversible phosphorylation of UMP to UDP. The chain is Uridylate kinase from Archaeoglobus fulgidus (strain ATCC 49558 / DSM 4304 / JCM 9628 / NBRC 100126 / VC-16).